A 226-amino-acid polypeptide reads, in one-letter code: Ribonuclease 3 (226 aa).

The 123-residue stretch at 6 to 128 folds into the RNase III domain; sequence ANKIQQILGY…LIGSIYLDSN (123 aa). Glutamate 41 provides a ligand contact to Mg(2+). The active site involves aspartate 45. Mg(2+) is bound by residues asparagine 114 and glutamate 117. Glutamate 117 is a catalytic residue. Positions 155-225 constitute a DRBM domain; sequence DPKTRLQEYL…ARKALIKLGV (71 aa).

This sequence belongs to the ribonuclease III family. As to quaternary structure, homodimer. It depends on Mg(2+) as a cofactor.

Its subcellular location is the cytoplasm. It carries out the reaction Endonucleolytic cleavage to 5'-phosphomonoester.. In terms of biological role, digests double-stranded RNA. Involved in the processing of primary rRNA transcript to yield the immediate precursors to the large and small rRNAs (23S and 16S). Processes some mRNAs, and tRNAs when they are encoded in the rRNA operon. Processes pre-crRNA and tracrRNA of type II CRISPR loci if present in the organism. This chain is Ribonuclease 3, found in Buchnera aphidicola subsp. Schizaphis graminum (strain Sg).